Consider the following 208-residue polypeptide: Uridine kinase (208 aa).

Position 11–18 (11–18 (GGSGSGKT)) interacts with ATP.

Belongs to the uridine kinase family.

The protein resides in the cytoplasm. It carries out the reaction uridine + ATP = UMP + ADP + H(+). The enzyme catalyses cytidine + ATP = CMP + ADP + H(+). It functions in the pathway pyrimidine metabolism; CTP biosynthesis via salvage pathway; CTP from cytidine: step 1/3. The protein operates within pyrimidine metabolism; UMP biosynthesis via salvage pathway; UMP from uridine: step 1/1. This Staphylococcus carnosus (strain TM300) protein is Uridine kinase.